Reading from the N-terminus, the 373-residue chain is Transcription factor SPATULA (373 aa).

Residues 1–21 show a composition bias toward basic and acidic residues; it reads MISQREEREEKKQRVMGDKKL. Disordered stretches follow at residues 1–46 and 141–210; these read MISQ…PSSS and VQGN…KRRR. Positions 141 to 160 are enriched in low complexity; it reads VQGNSSGTRVSSSSVGASGN. Residues 161–177 are compositionally biased toward acidic residues; sequence ETDEYDCESEEGGEAVV. Over residues 182 to 191 the composition is skewed to low complexity; sequence SSKSGPSSRS. Over residues 197 to 210 the composition is skewed to basic and acidic residues; the sequence is RAAEVHNLSEKRRR. In terms of domain architecture, bHLH spans 197-246; the sequence is RAAEVHNLSEKRRRSRINEKMKALQSLIPNSNKTDKASMLDEAIEYLKQL.

Homodimer. Interacts with HEC1, HEC2 and HEC3. Binds to RGL2 and RGA. Expressed in lateral root caps, young leaves, stipules, maturing pith cells of the stem, differentiating vascular cells, shoot apical meristems and flowers.

The protein resides in the nucleus. Its function is as follows. Transcription factor that plays a role in floral organogenesis. Promotes the growth of carpel margins and of pollen tract tissues derived from them. In Arabidopsis thaliana (Mouse-ear cress), this protein is Transcription factor SPATULA (SPT).